Here is a 534-residue protein sequence, read N- to C-terminus: CTP synthase (534 aa).

Residues 1–268 (MAAKYIFVTG…DQIVCDHLQL (268 aa)) form an amidoligase domain region. Residue S14 coordinates CTP. S14 lines the UTP pocket. An ATP-binding site is contributed by 15–20 (SLGKGI). Position 55 (Y55) interacts with L-glutamine. D72 contributes to the ATP binding site. The Mg(2+) site is built by D72 and E142. CTP contacts are provided by residues 149–151 (DIE), 189–194 (KSKPTQ), and K225. UTP-binding positions include 189 to 194 (KSKPTQ) and K225. Residues 293-534 (RIAIVGKYVE…FVRNALAAQA (242 aa)) enclose the Glutamine amidotransferase type-1 domain. G355 lines the L-glutamine pocket. The active-site Nucleophile; for glutamine hydrolysis is the C382. L-glutamine-binding positions include 383–386 (LGMQ), E406, and R463. Catalysis depends on residues H508 and E510.

This sequence belongs to the CTP synthase family. Homotetramer.

It catalyses the reaction UTP + L-glutamine + ATP + H2O = CTP + L-glutamate + ADP + phosphate + 2 H(+). It carries out the reaction L-glutamine + H2O = L-glutamate + NH4(+). The catalysed reaction is UTP + NH4(+) + ATP = CTP + ADP + phosphate + 2 H(+). It functions in the pathway pyrimidine metabolism; CTP biosynthesis via de novo pathway; CTP from UDP: step 2/2. With respect to regulation, allosterically activated by GTP, when glutamine is the substrate; GTP has no effect on the reaction when ammonia is the substrate. The allosteric effector GTP functions by stabilizing the protein conformation that binds the tetrahedral intermediate(s) formed during glutamine hydrolysis. Inhibited by the product CTP, via allosteric rather than competitive inhibition. In terms of biological role, catalyzes the ATP-dependent amination of UTP to CTP with either L-glutamine or ammonia as the source of nitrogen. Regulates intracellular CTP levels through interactions with the four ribonucleotide triphosphates. The chain is CTP synthase from Shouchella clausii (strain KSM-K16) (Alkalihalobacillus clausii).